The sequence spans 637 residues: Sphingomyelin phosphodiesterase B (637 aa).

Positions 1–20 (MKVKAPILLLFVFLINFCFS) are cleaved as a signal peptide. N73 carries an N-linked (GlcNAc...) asparagine glycan. A Saposin B-type domain is found at 73–155 (NGTKCDICKF…GFVGFCPYVP (83 aa)). 3 disulfide bridges follow: C77–C151, C80–C145, and C108–C119. Residues N128 and N157 are each glycosylated (N-linked (GlcNAc...) asparagine). Residues D191 and H193 each contribute to the Zn(2+) site. A disulfide bond links C212 and C233. D263 contributes to the Zn(2+) binding site. Residue N279 is glycosylated (N-linked (GlcNAc...) asparagine). N304 is a Zn(2+) binding site. N377 is a glycosylation site (N-linked (GlcNAc...) asparagine). The Zn(2+) site is built by H407, H441, and H443. N-linked (GlcNAc...) asparagine glycans are attached at residues N523 and N546. C582 and C595 are disulfide-bonded. N606 carries N-linked (GlcNAc...) asparagine glycosylation.

Belongs to the acid sphingomyelinase family. Zn(2+) is required as a cofactor.

The protein localises to the secreted. In terms of biological role, converts sphingomyelin to ceramide. The protein is Sphingomyelin phosphodiesterase B (sgmB) of Dictyostelium discoideum (Social amoeba).